The primary structure comprises 340 residues: Glycerol-3-phosphate dehydrogenase [NAD(P)+] (340 aa).

Positions 13, 14, and 108 each coordinate NADPH. Sn-glycerol 3-phosphate is bound by residues Lys-108, Gly-139, and Ser-141. Position 143 (Ala-143) interacts with NADPH. Residues Lys-194, Asp-247, Ser-257, Arg-258, and Asn-259 each coordinate sn-glycerol 3-phosphate. Lys-194 functions as the Proton acceptor in the catalytic mechanism. Arg-258 provides a ligand contact to NADPH. Residues Val-282 and Glu-284 each coordinate NADPH.

This sequence belongs to the NAD-dependent glycerol-3-phosphate dehydrogenase family.

The protein localises to the cytoplasm. It catalyses the reaction sn-glycerol 3-phosphate + NAD(+) = dihydroxyacetone phosphate + NADH + H(+). The enzyme catalyses sn-glycerol 3-phosphate + NADP(+) = dihydroxyacetone phosphate + NADPH + H(+). The protein operates within membrane lipid metabolism; glycerophospholipid metabolism. Functionally, catalyzes the reduction of the glycolytic intermediate dihydroxyacetone phosphate (DHAP) to sn-glycerol 3-phosphate (G3P), the key precursor for phospholipid synthesis. The chain is Glycerol-3-phosphate dehydrogenase [NAD(P)+] from Streptococcus thermophilus (strain CNRZ 1066).